A 370-amino-acid chain; its full sequence is Acyl-CoA:lysophosphatidylglycerol acyltransferase 1 (370 aa).

The chain crosses the membrane as a helical span at residues 22-42 (FAFMVVNNLVAIPSYICYVII). The HXXXXD motif signature appears at 101 to 106 (HQATGD). Residues 342-362 (LWIFLIQSFAFLSGYMWYNII) traverse the membrane as a helical segment.

Belongs to the 1-acyl-sn-glycerol-3-phosphate acyltransferase family. As to expression, highly expressed in liver and placenta. Also expressed in peripheral blood, lung, kidney and brain. Detected at lower levels in colon. High expression is detected in brain and testis.

It localises to the endoplasmic reticulum membrane. It catalyses the reaction a 2-acyl-sn-glycero-3-phosphoethanolamine + octadecanoyl-CoA = 1-octadecanoyl-2-acyl-sn-glycero-3-phosphoethanolamine + CoA. The enzyme catalyses 2-(9Z-octadecenoyl)-sn-glycero-3-phosphoethanolamine + octadecanoyl-CoA = 1-octadecanoyl-2-(9Z-octadecenoyl)-sn-glycero-3-phosphoethanolamine + CoA. The catalysed reaction is a 2-acyl-sn-glycero-3-phosphoethanolamine + hexadecanoyl-CoA = 1-hexadecanoyl-2-acyl-sn-glycero-3-phosphoethanolamine + CoA. It carries out the reaction 2-(9Z-octadecenoyl)-sn-glycero-3-phosphoethanolamine + hexadecanoyl-CoA = 1-hexadecanoyl-2-(9Z-octadecenoyl)-sn-glycero-3-phosphoethanolamine + CoA. It catalyses the reaction 1-tetradecanoyl-sn-glycero-3-phospho-(1'-sn-glycerol) + hexadecanoyl-CoA = 1-tetradecanoyl-2-hexadecanoyl-sn-glycero-3-phospho-(1'-sn-glycerol) + CoA. The enzyme catalyses 1-hexadecanoyl-sn-glycero-3-phospho-(1'-sn-glycerol) + dodecanoyl-CoA = 1-hexadecanoyl-2-dodecanoyl-sn-glycero-3-phospho-(1'-sn-glycerol) + CoA. The catalysed reaction is 1-hexadecanoyl-sn-glycero-3-phospho-(1'-sn-glycerol) + hexadecanoyl-CoA = 1,2-dihexadecanoyl-sn-glycero-3-phospho-(1'-sn-glycerol) + CoA. It carries out the reaction 1-hexadecanoyl-sn-glycero-3-phospho-(1'-sn-glycerol) + octadecanoyl-CoA = 1-hexadecanoyl-2-octadecanoyl-sn-glycero-3-phospho-(1'-sn-glycerol) + CoA. It catalyses the reaction 1-octadecanoyl-sn-glycero-3-phospho-(1'-sn-glycerol) + hexadecanoyl-CoA = 1-octadecanoyl-2-hexadecanoyl-sn-glycero-3-phospho-(1'-sn-glycerol) + CoA. The enzyme catalyses 1-(9Z-octadecenoyl)-sn-glycero-3-phospho-(1'-sn-glycerol) + dodecanoyl-CoA = 1-(9Z-octadecenoyl)-2-dodecanoyl-sn-glycero-3-phospho-(1'-sn-glycerol) + CoA. The catalysed reaction is 1-hexadecanoyl-sn-glycero-3-phospho-(1'-sn-glycerol) + (9Z)-octadecenoyl-CoA = 1-hexadecanoyl-2-(9Z-octadecenoyl)-sn-glycero-3-phospho-(1'-sn-glycerol) + CoA. It carries out the reaction 1-(9Z-octadecenoyl)-sn-glycero-3-phospho-(1'-sn-glycerol) + hexadecanoyl-CoA = 1-(9Z-octadecenoyl)-2-hexadecanoyl-sn-glycero-3-phospho-(1'-sn-glycerol) + CoA. It catalyses the reaction 1-(9Z-octadecenoyl)-sn-glycero-3-phospho-(1'-sn-glycerol) + (9Z)-octadecenoyl-CoA = 1,2-di-(9Z-octadecenoyl)-sn-glycero-3-phospho-(1'-sn-glycerol) + CoA. The enzyme catalyses a 2-acylglycerol + an acyl-CoA = a 1,2-diacylglycerol + CoA. The catalysed reaction is a 2-acylglycerol + hexadecanoyl-CoA = a 1-hexadecanoyl-2-acylglycerol + CoA. It carries out the reaction a 1-acylglycerol + hexadecanoyl-CoA = an hexadecanoyl-acylglycerol + CoA. It catalyses the reaction a 2-acyl-sn-glycero-3-phosphocholine + an acyl-CoA = a 1,2-diacyl-sn-glycero-3-phosphocholine + CoA. The enzyme catalyses 2-(9Z-octadecenoyl)-sn-glycero-3-phosphocholine + octadecanoyl-CoA = 1-octadecanoyl-2-(9Z-octadecenoyl)-sn-glycero-3-phosphocholine + CoA. The catalysed reaction is 2-(9Z,12Z-octadecadienoyl)-sn-glycero-3-phosphocholine + octadecanoyl-CoA = 1-octadecanoyl-2-(9Z,12Z)-octadecadienoyl-sn-glycero-3-phosphocholine + CoA. It carries out the reaction 2-(5Z,8Z,11Z,14Z)-eicosatetraenoyl-sn-glycero-3-phosphocholine + octadecanoyl-CoA = 1-octadecanoyl-2-(5Z,8Z,11Z,14Z-eicosatetraenoyl)-sn-glycero-3-phosphocholine + CoA. It catalyses the reaction 2-(9Z-octadecenoyl)-sn-glycero-3-phosphocholine + hexadecanoyl-CoA = 1-hexadecanoyl-2-(9Z-octadecenoyl)-sn-glycero-3-phosphocholine + CoA. The enzyme catalyses 2-(9Z-octadecenoyl)-sn-glycero-3-phospho-L-serine + hexadecanoyl-CoA = 1-hexadecanoyl-2-(9Z-octadecenoyl)-sn-glycero-3-phospho-L-serine + CoA. The catalysed reaction is 2-(4Z,7Z,10Z,13Z,16Z,19Z-docosahexaenoyl)-sn-glycero-3-phosphocholine + octadecanoyl-CoA = 1-octadecanoyl-2-(4Z,7Z,10Z,13Z,16Z,19Z-docosahexaenoyl)-sn-glycero-3-phosphocholine + CoA. It carries out the reaction 1-(9Z-octadecenoyl)-sn-glycero-3-phospho-L-serine + octadecanoyl-CoA = 1-(9Z-octadecenoyl)-2-octadecanoyl-sn-glycero-3-phospho-L-serine + CoA. It catalyses the reaction a 2-acyl-sn-glycero-3-phosphoethanolamine + a fatty acyl-CoA = a 1,2-diacyl-sn-glycero-3-phosphoethanolamine + CoA. Functionally, lysophospholipid acyltransferase involved in fatty acyl chain remodeling of glycerophospholipids in the endoplasmic reticulum membrane. Selectively catalyzes the transfer and esterification of saturated long-chain fatty acids from acyl-CoA to the sn-1 position of 1-lyso-2-acyl phosphatidylethanolamines (1-lyso-PE, LPE), with a preference for stearoyl CoA over palmitoyl CoA as acyl donor. Acts in concert with an unknown phospholipase A1 to convert palmitate phosphatidylethanolamine (PE) species into stearate ones. Provides substrates to the PE methylation pathway, controlling stearate/palmitate composition of PE and phosphatidylcholine (PC) species with an overall impact on de novo hepatic lipid synthesis, body fat content and life span. Can acylate lysophosphatidylglycerols (LPG) using various saturated fatty acyl-CoAs as acyl donors. Can also acylate monoacylglycerols with a preference for 2-monoacylglycerols over 1-monoacylglycerols. Has no activity toward lysophosphatidic acids (LPA). The sequence is that of Acyl-CoA:lysophosphatidylglycerol acyltransferase 1 from Homo sapiens (Human).